A 436-amino-acid polypeptide reads, in one-letter code: Probable mediator of RNA polymerase II transcription subunit 26b (436 aa).

Residues 71–111 (PGDDEANRGTTGNGGGGTAVDEDYEVAGGSKESKANSSRGD) are disordered. A TFIIS N-terminal domain is found at 139-214 (KEVARIKEIL…AEWKELVDQW (76 aa)). A disordered region spans residues 263-376 (HFFDSLDFDG…PQQEKLKGLD (114 aa)). Composition is skewed to basic and acidic residues over residues 276–290 (NSEE…ERRP) and 332–350 (TEQR…EKPM). A coiled-coil region spans residues 382–402 (EFAKRKLQESYQHHENAKKQR). Residues 408-436 (EMIPKQGSAQKPQLKRPGMSNRNWANGRK) are disordered. The span at 427-436 (SNRNWANGRK) shows a compositional bias: polar residues.

This sequence belongs to the Mediator complex subunit 26 family. Component of the Mediator complex.

The protein localises to the nucleus. Functionally, component of the Mediator complex, a coactivator involved in the regulated transcription of nearly all RNA polymerase II-dependent genes. Mediator functions as a bridge to convey information from gene-specific regulatory proteins to the basal RNA polymerase II transcription machinery. The Mediator complex, having a compact conformation in its free form, is recruited to promoters by direct interactions with regulatory proteins and serves for the assembly of a functional preinitiation complex with RNA polymerase II and the general transcription factors. May play a role in transcription elongation. This chain is Probable mediator of RNA polymerase II transcription subunit 26b (MED26B), found in Arabidopsis thaliana (Mouse-ear cress).